A 147-amino-acid polypeptide reads, in one-letter code: uncharacterized protein (147 aa).

The disordered stretch occupies residues Gly30–Phe102. The segment covering Arg62–Gln71 has biased composition (polar residues).

This is an uncharacterized protein from Homo sapiens (Human).